Here is an 837-residue protein sequence, read N- to C-terminus: Semaphorin-4B (837 aa).

The signal sequence occupies residues 1 to 43 (MLRTAMGLRSWLAAPWGALPPRPPLLLLLLLLLLLQPPPPTWA). Over 44–717 (LSPRISLPLG…WGADRSYWKE (674 aa)) the chain is Extracellular. The region spanning 47 to 523 (RISLPLGSEE…SHSGVVQVPM (477 aa)) is the Sema domain. N-linked (GlcNAc...) asparagine glycosylation is found at N69 and N96. 2 disulfide bridges follow: C120–C131 and C149–C158. N165 carries N-linked (GlcNAc...) asparagine glycosylation. 2 disulfide bridges follow: C286–C399 and C310–C359. N-linked (GlcNAc...) asparagine glycans are attached at residues N410 and N525. In terms of domain architecture, PSI spans 525 to 579 (NCSLYRSCGDCLLARDPYCAWSGSSCKHVSLYQPQLATRPWIQDIEGASAKDLCS). Cystine bridges form between C526-C543 and C611-C656. An Ig-like C2-type domain is found at 604 to 663 (NTVNTLACPLLSNLATRLWLRNGAPVNASASCHVLPTGDLLLVGTQQLGEFQCWSLEEGF). N630 carries an N-linked (GlcNAc...) asparagine glycan. A helical membrane pass occupies residues 718–738 (FLVMCTLFVLAVLLPVLFLLY). The Cytoplasmic portion of the chain corresponds to 739-837 (RHRNSMKVFL…LGSEIRDSVV (99 aa)). A disordered region spans residues 767–805 (PETRPLNGLGPPSTPLDHRGYQSLSDSPPGSRVFTESEK). Phosphoserine is present on residues S793, S818, and S830.

This sequence belongs to the semaphorin family.

Its subcellular location is the membrane. Its function is as follows. Inhibits axonal extension by providing local signals to specify territories inaccessible for growing axons. In Homo sapiens (Human), this protein is Semaphorin-4B.